Reading from the N-terminus, the 281-residue chain is MELIIISGRSGSGKSVALRVVEDLGYYCVDNIPVNLLPSLVRSVSDNYDKIAVSIDVRNLPKDQQQFNDILEYLPDFAKPTLFYLDSDDQTLIRRYSETRRLHPLSIDSLPLDLAIKKEKELLDVLVTRADHVIDTTDLSVHQLAESMRETILGKKDKQLIITFESFGFKHGIPKGADYVFDARFLPNPHWEPELKPLTGLDQPVKDYLASHSIVQKFTWQIQTFVQTWLPHLERNNRSYLTIAIGCTGGQHRSVYLAQTIGESFAMSHPNVKIRHREQEK.

ATP is bound at residue 8-15 (GRSGSGKS). 56–59 (DVRN) provides a ligand contact to GTP.

This sequence belongs to the RapZ-like family.

Functionally, displays ATPase and GTPase activities. This is Nucleotide-binding protein PSHAa2554 from Pseudoalteromonas translucida (strain TAC 125).